A 906-amino-acid polypeptide reads, in one-letter code: Protein translocase subunit SecA (906 aa).

Residues Gln-86, 104–108, and Asp-511 each bind ATP; that span reads GEGKT. Composition is skewed to basic and acidic residues over residues 853-865 and 877-888; these read HESV…RHDE and VRREGPKVKRND. The tract at residues 853-906 is disordered; sequence HESVIDNNQRHDEDEQEEAPKVQQVRREGPKVKRNDPCPCGSGKKYKQCHGKVE. 4 residues coordinate Zn(2+): Cys-890, Cys-892, Cys-901, and His-902. A compositionally biased stretch (basic residues) spans 896-906; sequence KKYKQCHGKVE.

This sequence belongs to the SecA family. Monomer and homodimer. Part of the essential Sec protein translocation apparatus which comprises SecA, SecYEG and auxiliary proteins SecDF-YajC and YidC. It depends on Zn(2+) as a cofactor.

It localises to the cell inner membrane. Its subcellular location is the cytoplasm. The enzyme catalyses ATP + H2O + cellular proteinSide 1 = ADP + phosphate + cellular proteinSide 2.. Part of the Sec protein translocase complex. Interacts with the SecYEG preprotein conducting channel. Has a central role in coupling the hydrolysis of ATP to the transfer of proteins into and across the cell membrane, serving both as a receptor for the preprotein-SecB complex and as an ATP-driven molecular motor driving the stepwise translocation of polypeptide chains across the membrane. The chain is Protein translocase subunit SecA from Francisella tularensis subsp. holarctica (strain OSU18).